Reading from the N-terminus, the 178-residue chain is Small ribosomal subunit protein uS4 (178 aa).

In terms of domain architecture, S4 RNA-binding spans 104–166; that stretch reads RRLQTIVYRK…PNSPMASENH (63 aa). The tract at residues 158–178 is disordered; sequence NSPMASENHPERTAAVSEENQ.

Belongs to the universal ribosomal protein uS4 family. Part of the 30S ribosomal subunit. Contacts protein S5. The interaction surface between S4 and S5 is involved in control of translational fidelity.

Its function is as follows. One of the primary rRNA binding proteins, it binds directly to 16S rRNA where it nucleates assembly of the body of the 30S subunit. Functionally, with S5 and S12 plays an important role in translational accuracy. The polypeptide is Small ribosomal subunit protein uS4 (Methanococcus maripaludis (strain C5 / ATCC BAA-1333)).